The primary structure comprises 179 residues: NAD(P)H-quinone oxidoreductase subunit I, chloroplastic (179 aa).

2 4Fe-4S ferredoxin-type domains span residues 55–84 (GRIH…VDWR) and 95–124 (LNYS…MTEE). The [4Fe-4S] cluster site is built by C64, C67, C70, C74, C104, C107, C110, and C114.

This sequence belongs to the complex I 23 kDa subunit family. As to quaternary structure, NDH is composed of at least 16 different subunits, 5 of which are encoded in the nucleus. [4Fe-4S] cluster is required as a cofactor.

It is found in the plastid. The protein localises to the chloroplast thylakoid membrane. The enzyme catalyses a plastoquinone + NADH + (n+1) H(+)(in) = a plastoquinol + NAD(+) + n H(+)(out). The catalysed reaction is a plastoquinone + NADPH + (n+1) H(+)(in) = a plastoquinol + NADP(+) + n H(+)(out). Its function is as follows. NDH shuttles electrons from NAD(P)H:plastoquinone, via FMN and iron-sulfur (Fe-S) centers, to quinones in the photosynthetic chain and possibly in a chloroplast respiratory chain. The immediate electron acceptor for the enzyme in this species is believed to be plastoquinone. Couples the redox reaction to proton translocation, and thus conserves the redox energy in a proton gradient. The sequence is that of NAD(P)H-quinone oxidoreductase subunit I, chloroplastic from Acorus calamus (Sweet flag).